The following is a 198-amino-acid chain: Coagulation factor XIII A chain (198 aa).

A disordered region spans residues 1–36; it reads MSESSGTAFGGRRAIPPNTSNAAENDPPTVELQGLV. An N-acetylserine modification is found at Ser2. Residues 2–38 constitute a propeptide, activation peptide; it reads SESSGTAFGGRRAIPPNTSNAAENDPPTVELQGLVPR.

Belongs to the transglutaminase superfamily. Transglutaminase family. As to quaternary structure, tetramer of two A chains (F13A1) and two B (F13B) chains. It depends on Ca(2+) as a cofactor. In terms of processing, the activation peptide is released by thrombin.

The protein localises to the cytoplasm. It is found in the secreted. The enzyme catalyses L-glutaminyl-[protein] + L-lysyl-[protein] = [protein]-L-lysyl-N(6)-5-L-glutamyl-[protein] + NH4(+). In terms of biological role, factor XIII is activated by thrombin and calcium ion to a transglutaminase that catalyzes the formation of gamma-glutamyl-epsilon-lysine cross-links between fibrin chains, thus stabilizing the fibrin clot. Also cross-link alpha-2-plasmin inhibitor, or fibronectin, to the alpha chains of fibrin. In Bos taurus (Bovine), this protein is Coagulation factor XIII A chain (F13A1).